The sequence spans 108 residues: Transcription factor S (108 aa).

Positions 5, 8, 21, 24, 69, 72, 97, and 100 each coordinate Zn(2+). The C4-type zinc finger occupies 5–24 (CPKCNNLMLPKDGKLKCAVC). Residues 65 to 105 (TRIECPKCGHNEAYWWLQQTRCADEPETRFYKCKKCGHTWR) form a TFIIS-type zinc finger.

Belongs to the archaeal RpoM/eukaryotic RPA12/RPB9/RPC11 RNA polymerase family.

Functionally, induces RNA cleavage activity in the RNA polymerase. In its presence, the cleavage activity of the RNA polymerase truncates the RNA back to position +15 in a stepwise manner by releasing mainly dinucleotides from the 3'-end of the nascent RNA. The truncated RNAs are able to continue elongation. Involved in transcriptional proofreading and fidelity. Misincorporation of nucleotides during elongation of transcription leads to arrested elongation complexes which are rescued by TFS-promoted removal of a dinucleotide from the 3'-end. TFS is able to induce a cleavage resynthesis cycle in stalled elongation complexes (resulting from the next missing nucleotide or a reduced incorporation rate of a wrong nucleotide) preventing misincorporation and enabling proofreading in a post-incorporation manner. Pausing of elongation complexes is the main determinant of TFS-induced RNA cleavage. The protein is Transcription factor S of Methanocaldococcus jannaschii (strain ATCC 43067 / DSM 2661 / JAL-1 / JCM 10045 / NBRC 100440) (Methanococcus jannaschii).